A 1287-amino-acid chain; its full sequence is MSGGGGGGGSAPSRFADYFVICGLDTETGLEPDELSALCQYIQASKARDGASPFISSTTEGENFEQTPLRRTFKSKVLARYPENVDWNPFDQDAVGMLCMPKGLAFKTQADPREPQFHAFIITREDGSRTFGFALTFYEEVTSKQICSAMQTLYHMHNAEYDVLHAPLADGGDQSGMEDGEGIPGTKLQRFNSYDISRDTLYVSKCICLITPMSFMKACRSVLQQLHQAVTSPQPPPLPLESYIYNVLYEVPLPPPGRSLKFSGVYGPIICQRPSTNELPLFDFPVKEVFELLGVENVFQLFTCALLEFQILLYSQHYQRLMTVAETITALMFPFQWQHVYVPILPASLLHFLDAPVPYLMGLHSNGLDDRSKLELPQEANLCFVDVDNHFIELPEDLPQFPNKLEFVQEVSEILMAFGVPPEGNLHCSESASKLKRIRASELVSDKRNGNIAGSPLHSYELLKENETIARLQALVKRTGVSLEKLEVREDPSSNKDFKVQCDEEELRIYQLNIQIREVFANRFTQMFADYEVFVIQPSQDKESWFTNREQMQNFDKASFLSDQPEPYLPFLSRFLETQMFASFIDNKIMCHDDDDKDPVLRVFDSRVDKIRLLNVRTPTLRTSMYQKCTTVDEAEKAIELRLAKIDHTAVHPHLLDMKIGQGKYEPGFFPKLQSDVLCTGPASNKWTKRNAPAQWRRKDRQKQHTEHLRLDNDQREKYIQEARNMGSTIRQPKLSNLSPSVIAQTNWKFVEGLLKECRNKTKRMLVEKMGREAVELGHGEVNITGVEENTLIASLCDLLERIWSHGLQVKQGKSALWSHLLHYQENRQRKLTSGSLSTSGILLDSERRKSDASAVMSPLRISLIQDMRHIQNIGEIKTDVGKARAWVRLSMEKKLLSRHLKQLLSDHELTKKLYKRYAFLRCDDEKEQFLYHLLSFNAVDYFCFTNVFTTILIPYHILIVPSKKLGGSMFTANPWICISGELGETQILQIPRNVLEMTFECQNLGKLTTVQIGHDNSGLYAKWLVECVMVRNEVTGHTYKFPCGRWLGKGMDDGSLERVLVGELLTSLPEVDERPCRTPPLQQSPSVIRRLVTISPNNKPKLNTGQIQESIGEAVNGIVKHFHKPEKERGSLTLLLCGECGLVSALEQAFQHGFKSPRLFKNVFIWDFLEKAQTYYETLEQNDVVPEENWHTRARNFCRFVTAVNNTPRNIGKDGKFQMLVCLGARDHLLHHWIALLADCPITAHMYEDVALIKDHTLVNSLIRVLQTLQEFNITLDTSLVKGIDI.

The 203-residue stretch at 57–259 (STTEGENFEQ…EVPLPPPGRS (203 aa)) folds into the uDENN domain. Position 193 is a phosphoserine (S193). Residues 278-414 (ELPLFDFPVK…LEFVQEVSEI (137 aa)) form the cDENN domain. Residues 416–598 (MAFGVPPEGN…IMCHDDDDKD (183 aa)) form the dDENN domain. Residues 787–950 (VEENTLIASL…DYFCFTNVFT (164 aa)) enclose the RUN 1 domain. Residues 954–1062 (IPYHILIVPS…DDGSLERVLV (109 aa)) form the PLAT domain. Position 1079 is a phosphothreonine (T1079). Residues S1085, S1087, and S1096 each carry the phosphoserine modification. The RUN 2 domain occupies 1134-1280 (TLLLCGECGL…QEFNITLDTS (147 aa)).

This sequence belongs to the RAB6IP1 family. As to quaternary structure, interacts with RAB6A bound to GTP.

It is found in the golgi apparatus membrane. Guanine nucleotide exchange factor (GEF) which may activate RAB6A and RAB39A and/or RAB39B. Promotes the exchange of GDP to GTP, converting inactive GDP-bound Rab proteins into their active GTP-bound form. Involved in the negative regulation of neurite outgrowth. The protein is DENN domain-containing protein 5A (Dennd5a) of Mus musculus (Mouse).